The following is a 117-amino-acid chain: Large ribosomal subunit protein bL20 (117 aa).

This sequence belongs to the bacterial ribosomal protein bL20 family.

Binds directly to 23S ribosomal RNA and is necessary for the in vitro assembly process of the 50S ribosomal subunit. It is not involved in the protein synthesizing functions of that subunit. The chain is Large ribosomal subunit protein bL20 from Neorickettsia sennetsu (strain ATCC VR-367 / Miyayama) (Ehrlichia sennetsu).